Consider the following 122-residue polypeptide: Large ribosomal subunit protein uL14 (122 aa).

It belongs to the universal ribosomal protein uL14 family. Part of the 50S ribosomal subunit. Forms a cluster with proteins L3 and L19. In the 70S ribosome, L14 and L19 interact and together make contacts with the 16S rRNA in bridges B5 and B8.

Its function is as follows. Binds to 23S rRNA. Forms part of two intersubunit bridges in the 70S ribosome. The chain is Large ribosomal subunit protein uL14 from Campylobacter fetus subsp. fetus (strain 82-40).